A 742-amino-acid chain; its full sequence is Zinc transporter ZIP6 (742 aa).

The Extracellular portion of the chain corresponds to 1–353 (MMTFLCTRSG…QRNTPVYIAW (353 aa)). Residues Asn-94 and Asn-127 are each glycosylated (N-linked (GlcNAc...) asparagine). Disordered stretches follow at residues 148 to 182 (PVTT…SQSD) and 191 to 210 (MNQE…RSRR). Basic and acidic residues predominate over residues 152–165 (KKGDMDHSVEKSDP). The span at 192 to 206 (NQESTTALTTPSYVT) shows a compositional bias: polar residues. N-linked (GlcNAc...) asparagine glycans are attached at residues Asn-212, Asn-232, and Asn-237. The disordered stretch occupies residues 220-260 (TQDHASFSPSQPNVTHSNHTHHDEDTPTHQHDDHDEHEHAR). Residues 222–236 (DHASFSPSQPNVTHS) are compositionally biased toward polar residues. The span at 239–260 (THHDEDTPTHQHDDHDEHEHAR) shows a compositional bias: basic and acidic residues. Asn-267 and Asn-337 each carry an N-linked (GlcNAc...) asparagine glycan. Residues 310–342 (EDEHSDHSHHHKHHHHHHDHQHLQHPHNHTNGR) form a disordered region. Residues 316–339 (HSHHHKHHHHHHDHQHLQHPHNHT) are compositionally biased toward basic residues. Residues 354–374 (LGGFLSITLISLLALVGVVLI) traverse the membrane as a helical segment. The Cytoplasmic portion of the chain corresponds to 375–385 (PLMNRVCFNFL). The helical transmembrane segment at 386–406 (LSFLVALAVGTLSGDALLHLI) threads the bilayer. Residues 407–430 (PHSQGHHHHGHSEEHAEEEDSLRP) are Extracellular-facing. The helical transmembrane segment at 431-451 (VWTGLTALSGVYIMFLIEHFL) threads the bilayer. Topologically, residues 452 to 644 (TLGKMYKDKN…LKAGMSVRQA (193 aa)) are cytoplasmic. Residues 645–665 (MLYNLLSALMGYLGMIIGILI) traverse the membrane as a helical segment. Residues 666–671 (GHYAEN) are Extracellular-facing. Residues 672 to 692 (VATWIFALTAGLFMYVALVDM) traverse the membrane as a helical segment. Residues 693-710 (VPEMLHNDASEAGFSHYG) are Cytoplasmic-facing. A helical transmembrane segment spans residues 711–731 (FFLLQNAGILLGFGIMLIIAV). Over 732-742 (FEDRIQLDLGY) the chain is Extracellular.

Belongs to the ZIP transporter (TC 2.A.5) family. Post-translationally, cleaved on the N-terminus before locating to the plasma membrane. In terms of processing, N-glycosylated.

It is found in the cell membrane. It catalyses the reaction Zn(2+)(in) = Zn(2+)(out). Acts as a zinc-influx transporter which plays a role in zinc homeostasis and in the induction of epithelial-to-mesenchymal transition (EMT). This is Zinc transporter ZIP6 from Danio rerio (Zebrafish).